Reading from the N-terminus, the 182-residue chain is UPF0149 protein CGSHiEE_07975 (182 aa).

This sequence belongs to the UPF0149 family.

This is UPF0149 protein CGSHiEE_07975 from Haemophilus influenzae (strain PittEE).